Here is a 123-residue protein sequence, read N- to C-terminus: Loki profilin-3 (123 aa).

The protein belongs to the Asgard profilin family.

It localises to the cytoplasm. The protein resides in the cytoskeleton. In terms of biological role, binds to actin and affects the structure of the cytoskeleton. At high concentrations inhibits spontaneous rabbit actin nucleation. This strongly suggests this archaea has a profilin-regulated actin system, and actin-type genes can be identified in this organism. This Lokiarchaeum sp. (strain GC14_75) protein is Loki profilin-3.